The chain runs to 274 residues: UPF0758 protein RHECIAT_CH0001935 (274 aa).

Positions Met1 to Gly57 are disordered. The 123-residue stretch at Val152–Ile274 folds into the MPN domain. Positions 223, 225, and 236 each coordinate Zn(2+). A JAMM motif motif is present at residues His223–Asp236.

This sequence belongs to the UPF0758 family.

In Rhizobium etli (strain CIAT 652), this protein is UPF0758 protein RHECIAT_CH0001935.